Here is a 95-residue protein sequence, read N- to C-terminus: EFGILEDGETIFVYVNGQMLGSSKTMPTGKERLLDISHFYFGGDNGEEKGNRHVKVRNVLLYNRVLSASELQCRLPEEVVQKPQSASPTYLKARI.

The protein belongs to the receptors of complement activation (RCA) family.

Functionally, interferes with the efficient assembly of the host C3 convertase. Could protect parasites from complement-mediated lysis by sera from a number of different species. This Trypanosoma cruzi protein is Trypomastigote decay-accelerating factor.